The primary structure comprises 419 residues: tRNA (guanine-N(7)-)-methyltransferase non-catalytic subunit wuho (419 aa).

Positions Ser-51–Glu-61 are enriched in low complexity. A disordered region spans residues Ser-51–Asp-75. WD repeat units follow at residues Ala-87–Val-127, Gly-174–Ser-213, and Gly-217–Arg-255.

It belongs to the WD repeat TRM82 family. In terms of assembly, forms a heterodimer with the catalytic subunit Mettl1. Interacts with mei-P26 and weakly interacts with bgcn; required for the function or formation of the mei-P26-bgcn-bam-sxl complex. Interacts with nanos; may be involved in mei-P26-dependent derepression of the BMP signaling pathway. Interacts with Myc; the interaction may be mediated by mei-P26 and may be involved in the regulation of ribosome biogenesis. In terms of tissue distribution, in testis, it is present at high level in hub cells, a niche for germline stem cells of testis. Ubiquitously expressed in all testicular cells throughout spermatogenesis. Ubiquitously expressed in all germline and somatic cells of the ovary.

Its subcellular location is the nucleus. It is found in the cytoplasm. It functions in the pathway tRNA modification; N(7)-methylguanine-tRNA biosynthesis. Required for the Mettl1-dependent formation of N(7)-methylguanine at position 46 (m7G46) in tRNA. In the Mettl1-wuho methyltransferase complex, it is required to stabilize and induce conformational changes of the catalytic subunit. Required for binding of nanos mRNA and repression of translation by the mei-P26-bgcn-bam-sxl complex. May cooperate with mei-P26 and nanos to derepress the BMP signaling pathway. May cooperate with mei-P26 to suppress expression of a subset of microRNAs. May cooperate with mei-P26 to regulate bam expression levels in germline cells during gametogenesis. Required to promote mitosis to meiosis transition during gametogenesis. May regulate germline cell division in part by regulating ribosome biogenesis. The protein is tRNA (guanine-N(7)-)-methyltransferase non-catalytic subunit wuho of Drosophila willistoni (Fruit fly).